The chain runs to 588 residues: Probable urocanate hydratase (588 aa).

Over residues 1–15 (MDTPSAAAETSEPSA) the composition is skewed to low complexity. Residues 1–22 (MDTPSAAAETSEPSAQWQAYRG) form a disordered region. Residues 62-63 (GG), Gln-140, 188-190 (GMG), Glu-208, Arg-213, 254-255 (NA), 275-279 (QTSAH), and Tyr-334 each bind NAD(+). The active site involves Cys-431. Residue Gly-520 participates in NAD(+) binding.

It belongs to the urocanase family. It depends on NAD(+) as a cofactor.

The protein localises to the cytoplasm. It carries out the reaction 4-imidazolone-5-propanoate = trans-urocanate + H2O. Its pathway is amino-acid degradation; L-histidine degradation into L-glutamate; N-formimidoyl-L-glutamate from L-histidine: step 2/3. Catalyzes the conversion of urocanate to 4-imidazolone-5-propionate. This chain is Probable urocanate hydratase, found in Halobacterium salinarum (strain ATCC 29341 / DSM 671 / R1).